The chain runs to 234 residues: Phosphoribosylaminoimidazole-succinocarboxamide synthase (234 aa).

This sequence belongs to the SAICAR synthetase family.

The enzyme catalyses 5-amino-1-(5-phospho-D-ribosyl)imidazole-4-carboxylate + L-aspartate + ATP = (2S)-2-[5-amino-1-(5-phospho-beta-D-ribosyl)imidazole-4-carboxamido]succinate + ADP + phosphate + 2 H(+). It functions in the pathway purine metabolism; IMP biosynthesis via de novo pathway; 5-amino-1-(5-phospho-D-ribosyl)imidazole-4-carboxamide from 5-amino-1-(5-phospho-D-ribosyl)imidazole-4-carboxylate: step 1/2. The chain is Phosphoribosylaminoimidazole-succinocarboxamide synthase from Staphylococcus carnosus (strain TM300).